The primary structure comprises 507 residues: Inactive alanine aminotransferase (507 aa).

Ala173, Ser174, Tyr199, Asn255, and Ser324 together coordinate pyridoxal 5'-phosphate. Lys327 carries the post-translational modification N6-(pyridoxal phosphate)lysine. Residue Arg336 participates in pyridoxal 5'-phosphate binding.

It belongs to the class-I pyridoxal-phosphate-dependent aminotransferase family. Alanine aminotransferase subfamily. In terms of assembly, homodimer. The cofactor is pyridoxal 5'-phosphate.

The protein localises to the cytoplasm. It is found in the nucleus. Inactive alanine aminotransferase. Forms a catalytically active Schiff base with PLP, but lacks alanine transaminase activity, probably due to an altered structural conformation of the dimeric enzyme. This suggests this protein may have a yet undiscovered physiological function. The polypeptide is Inactive alanine aminotransferase (ALT2) (Saccharomyces cerevisiae (strain ATCC 204508 / S288c) (Baker's yeast)).